Reading from the N-terminus, the 175-residue chain is MALLEIIHYPSKILRTISKEIVSFDSKLHQQLDDMRETMIASEGIGLAAIQVGLPLRMLIINLPREDGVQHKEDCLEIINPKFIETKGTIMYKEGCLSVPGFYEEVERFEKVKIEYQNRFAEVKVLEASELLAVAIQHEIDHLNGVLFVDKLSILKRKKFEKELKELNKNPKSKS.

Fe cation contacts are provided by Cys-96 and His-138. Glu-139 is an active-site residue. Position 142 (His-142) interacts with Fe cation.

Belongs to the polypeptide deformylase family. It depends on Fe(2+) as a cofactor.

The catalysed reaction is N-terminal N-formyl-L-methionyl-[peptide] + H2O = N-terminal L-methionyl-[peptide] + formate. Functionally, removes the formyl group from the N-terminal Met of newly synthesized proteins. Requires at least a dipeptide for an efficient rate of reaction. N-terminal L-methionine is a prerequisite for activity but the enzyme has broad specificity at other positions. This chain is Peptide deformylase, found in Helicobacter pylori (strain Shi470).